Here is a 399-residue protein sequence, read N- to C-terminus: V-set and immunoglobulin domain-containing protein 4 (399 aa).

The first 19 residues, 1 to 19 (MGILLGLLLLGHLTVDTYG), serve as a signal peptide directing secretion. The Extracellular portion of the chain corresponds to 20-283 (RPILEVPESV…TSAGPGKSLP (264 aa)). 2 consecutive Ig-like domains span residues 21 to 131 (PILE…DKIT) and 143 to 226 (PTVT…SDIV). Intrachain disulfides connect C41-C113 and C165-C211. A helical membrane pass occupies residues 284–304 (VFAIILIISLCCMVVFTMAYI). Residues 305–399 (MLCRKTSQQE…FLATEGKSVC (95 aa)) lie on the Cytoplasmic side of the membrane.

Abundantly expressed in several fetal tissues. In adult tissues, highest expression in lung and placenta. Expressed in resting macrophages.

It is found in the membrane. Functionally, phagocytic receptor, strong negative regulator of T-cell proliferation and IL2 production. Potent inhibitor of the alternative complement pathway convertases. This Homo sapiens (Human) protein is V-set and immunoglobulin domain-containing protein 4 (VSIG4).